The sequence spans 343 residues: Arginine N-succinyltransferase (343 aa).

Residue Leu125 coordinates succinyl-CoA. His229 (proton donor) is an active-site residue.

It belongs to the arginine N-succinyltransferase family.

It catalyses the reaction succinyl-CoA + L-arginine = N(2)-succinyl-L-arginine + CoA + H(+). Its pathway is amino-acid degradation; L-arginine degradation via AST pathway; L-glutamate and succinate from L-arginine: step 1/5. Catalyzes the transfer of succinyl-CoA to arginine to produce N(2)-succinylarginine. The chain is Arginine N-succinyltransferase from Photorhabdus laumondii subsp. laumondii (strain DSM 15139 / CIP 105565 / TT01) (Photorhabdus luminescens subsp. laumondii).